The sequence spans 438 residues: UDP-N-acetylmuramate--L-alanine ligase (438 aa).

An ATP-binding site is contributed by 108-114 (GAHGKTS).

It belongs to the MurCDEF family.

It is found in the cytoplasm. The catalysed reaction is UDP-N-acetyl-alpha-D-muramate + L-alanine + ATP = UDP-N-acetyl-alpha-D-muramoyl-L-alanine + ADP + phosphate + H(+). The protein operates within cell wall biogenesis; peptidoglycan biosynthesis. Functionally, cell wall formation. This chain is UDP-N-acetylmuramate--L-alanine ligase, found in Oceanobacillus iheyensis (strain DSM 14371 / CIP 107618 / JCM 11309 / KCTC 3954 / HTE831).